We begin with the raw amino-acid sequence, 704 residues long: Protein arginine N-methyltransferase 7 (704 aa).

2 SAM-dependent MTase PRMT-type domains span residues Glu-14–Trp-356 and Ser-366–Glu-704.

It belongs to the class I-like SAM-binding methyltransferase superfamily. Protein arginine N-methyltransferase family. PRMT7 subfamily.

In terms of biological role, essential arginine methyltransferase that can both catalyze the formation of omega-N monomethylarginine (MMA) and symmetrical dimethylarginine (sDMA). Specifically mediates the symmetrical dimethylation of arginine residues in the small nuclear ribonucleoproteins SmD1 and SmD3. The chain is Protein arginine N-methyltransferase 7 (Art7) from Drosophila grimshawi (Hawaiian fruit fly).